The following is a 596-amino-acid chain: Proline--tRNA ligase (596 aa).

It belongs to the class-II aminoacyl-tRNA synthetase family. ProS type 1 subfamily. In terms of assembly, homodimer.

The protein localises to the cytoplasm. The catalysed reaction is tRNA(Pro) + L-proline + ATP = L-prolyl-tRNA(Pro) + AMP + diphosphate. Functionally, catalyzes the attachment of proline to tRNA(Pro) in a two-step reaction: proline is first activated by ATP to form Pro-AMP and then transferred to the acceptor end of tRNA(Pro). As ProRS can inadvertently accommodate and process non-cognate amino acids such as alanine and cysteine, to avoid such errors it has two additional distinct editing activities against alanine. One activity is designated as 'pretransfer' editing and involves the tRNA(Pro)-independent hydrolysis of activated Ala-AMP. The other activity is designated 'posttransfer' editing and involves deacylation of mischarged Ala-tRNA(Pro). The misacylated Cys-tRNA(Pro) is not edited by ProRS. This chain is Proline--tRNA ligase, found in Prochlorococcus marinus (strain NATL2A).